A 218-amino-acid polypeptide reads, in one-letter code: Probable 1-Cys peroxiredoxin (218 aa).

In terms of domain architecture, Thioredoxin spans 5–166 (WALGDLVPDI…VLRVLDSLQL (162 aa)). Catalysis depends on cysteine 47, which acts as the Cysteine sulfenic acid (-SOH) intermediate.

This sequence belongs to the peroxiredoxin family. Prx6 subfamily.

It localises to the nucleus. The protein resides in the cytoplasm. The enzyme catalyses a hydroperoxide + [thioredoxin]-dithiol = an alcohol + [thioredoxin]-disulfide + H2O. Functionally, thiol-specific peroxidase that catalyzes the reduction of hydrogen peroxide and organic hydroperoxides to water and alcohols, respectively. Seems to contribute to the inhibition of germination during stress. Associated with the rehydration events involved in the recovery of the desiccation-tolerant moss. The sequence is that of Probable 1-Cys peroxiredoxin from Syntrichia ruralis (Great hairy screw-moss).